The following is a 265-amino-acid chain: MQRYAVGIEFSGIQYRGWQTQQPGVASVQETIERVLSKIADEPITLHGAGRTDAGVHATNMVAHFDTNAIRPERGWIMGANSQLPKDISIQWIKQMDEEFHARFKATARRYRYVVYNAPHRPALLHKQVTHIYQKLDVQKMIKAASKFEGTHNFETFRAAACQSNQPVRHVKHCRLFEHGRYLVLDIQADGFLHHMVRNIMGCLLEIGQGMYEIDHIDTMFAAEDRKAAGITAPPDGLYFIQCYYPEQFDLPQPPLGPHWLNLPE.

Aspartate 53 (nucleophile) is an active-site residue. Substrate is bound at residue tyrosine 111.

This sequence belongs to the tRNA pseudouridine synthase TruA family. In terms of assembly, homodimer.

The enzyme catalyses uridine(38/39/40) in tRNA = pseudouridine(38/39/40) in tRNA. Functionally, formation of pseudouridine at positions 38, 39 and 40 in the anticodon stem and loop of transfer RNAs. The sequence is that of tRNA pseudouridine synthase A from Acinetobacter baumannii (strain SDF).